The following is a 217-amino-acid chain: Ribonuclease HII (217 aa).

One can recognise an RNase H type-2 domain in the interval 27 to 216 (SQVAGVDEAG…VKESIQEGVC (190 aa)). Residues D33, E34, and D126 each coordinate a divalent metal cation.

This sequence belongs to the RNase HII family. Requires Mn(2+) as cofactor. It depends on Mg(2+) as a cofactor.

Its subcellular location is the cytoplasm. The enzyme catalyses Endonucleolytic cleavage to 5'-phosphomonoester.. Endonuclease that specifically degrades the RNA of RNA-DNA hybrids. The polypeptide is Ribonuclease HII (Chlamydia trachomatis serovar L2 (strain ATCC VR-902B / DSM 19102 / 434/Bu)).